A 784-amino-acid chain; its full sequence is Ribosome biogenesis protein BOP1 homolog (784 aa).

A compositionally biased stretch (basic residues) spans 1-11 (MTKKLALKRRG). The segment at 1–159 (MTKKLALKRR…DSDTSDEEDI (159 aa)) is disordered. Composition is skewed to acidic residues over residues 27-36 (SENEEEEEDL), 45-54 (EDSTDDEGID), 62-73 (SEELQFESDEEG), and 84-111 (AEEDEESSDEEDNEEEGSTDEEEVEDEE). Composition is skewed to basic and acidic residues over residues 112-123 (KVSKSKQSDDKP) and 138-148 (LPKRDSSKPEY). The span at 149-158 (QDSDTSDEED) shows a compositional bias: acidic residues. WD repeat units follow at residues 445-486 (GHTD…RTIE), 488-526 (DEVVRCVAWCPNPKLSIIAVATGNRLLLVNPKVGDKVLV), 570-612 (THFK…SQIP), 615-653 (KSKGLIQFVLFHPVKPCFFVATQHNIRIYDLVKQELVKK), 656-695 (TNSKWISGMSIHPKGDNLLVSTYDKKMLWFDLDLSTKPYQ), 699-738 (LHRNAVRSVAFHRRYPLFASGSDDQAVIVSHGMVYNDLLQ), and 754-784 (RDEFGVLDVNWHPVQPWVFSTGADSTIRLYT).

The protein belongs to the WD repeat BOP1/ERB1 family.

It is found in the nucleus. The protein resides in the nucleolus. Its subcellular location is the nucleoplasm. In terms of biological role, required for maturation of ribosomal RNAs and formation of the large ribosomal subunit. The chain is Ribosome biogenesis protein BOP1 homolog from Drosophila sechellia (Fruit fly).